Consider the following 429-residue polypeptide: UDP-glucuronate 4-epimerase 1 (429 aa).

2 helical membrane-spanning segments follow: residues 36-56 (FLWALFLIALTASYLSFQSFV) and 87-107 (GISVLVTGATGFVGSHVSLAL). 89–120 (SVLVTGATGFVGSHVSLALRKRGDGVVGLDNF) is a binding site for NAD(+). Residue Tyr-239 is the Proton acceptor of the active site.

The protein belongs to the NAD(P)-dependent epimerase/dehydratase family. As to quaternary structure, homodimer. As to expression, in root stele, leaves, siliques, flowers, pollen and stems.

It localises to the golgi apparatus. Its subcellular location is the golgi stack membrane. The enzyme catalyses UDP-alpha-D-glucuronate = UDP-alpha-D-galacturonate. Its activity is regulated as follows. Inhibited by UDP-Xylose. Its function is as follows. UDP-D-glucuronate 4-epimerase involved in the synthesis of the negatively charged monosaccharide that forms the backbone of pectic cell wall components. The protein is UDP-glucuronate 4-epimerase 1 (GAE1) of Arabidopsis thaliana (Mouse-ear cress).